A 424-amino-acid polypeptide reads, in one-letter code: Glutamate-1-semialdehyde 2,1-aminomutase (424 aa).

Lysine 265 is modified (N6-(pyridoxal phosphate)lysine).

Belongs to the class-III pyridoxal-phosphate-dependent aminotransferase family. HemL subfamily. In terms of assembly, homodimer. It depends on pyridoxal 5'-phosphate as a cofactor.

The protein resides in the cytoplasm. It carries out the reaction (S)-4-amino-5-oxopentanoate = 5-aminolevulinate. The protein operates within porphyrin-containing compound metabolism; protoporphyrin-IX biosynthesis; 5-aminolevulinate from L-glutamyl-tRNA(Glu): step 2/2. This Alkaliphilus oremlandii (strain OhILAs) (Clostridium oremlandii (strain OhILAs)) protein is Glutamate-1-semialdehyde 2,1-aminomutase.